A 424-amino-acid polypeptide reads, in one-letter code: UPF0229 protein Ping_2705 (424 aa).

The disordered stretch occupies residues 77–108; it reads PGNQDFIGGDRIERPPSGGAGGSGSGASDSGK.

This sequence belongs to the UPF0229 family.

This Psychromonas ingrahamii (strain DSM 17664 / CCUG 51855 / 37) protein is UPF0229 protein Ping_2705.